Here is a 170-residue protein sequence, read N- to C-terminus: Myosin regulatory light chain 2, skeletal muscle isoform type 1 (170 aa).

Alanine 2 is subject to N,N,N-trimethylalanine. Serine 16 and serine 17 each carry phosphoserine. Phosphothreonine is present on residues threonine 26 and threonine 36. The EF-hand 1 domain occupies 26 to 61 (TQIQEFKEAFTVIDQNRDGIIDKEDLRDTFAAMGRL). Ca(2+) is bound by residues aspartate 39, asparagine 41, aspartate 43, and aspartate 50. Serine 76 is subject to Phosphoserine. 2 EF-hand domains span residues 96 to 131 (DPED…QCDR) and 132 to 167 (FSQE…GDAK). Threonine 102 bears the Phosphothreonine mark.

In terms of assembly, myosin is a hexamer of 2 heavy chains and 4 light chains.

The chain is Myosin regulatory light chain 2, skeletal muscle isoform type 1 from Oryctolagus cuniculus (Rabbit).